The following is a 124-amino-acid chain: Small ribosomal subunit protein uS12 (124 aa).

The residue at position 90 (Asp90) is a 3-methylthioaspartic acid.

The protein belongs to the universal ribosomal protein uS12 family. As to quaternary structure, part of the 30S ribosomal subunit. Contacts proteins S8 and S17. May interact with IF1 in the 30S initiation complex.

With S4 and S5 plays an important role in translational accuracy. In terms of biological role, interacts with and stabilizes bases of the 16S rRNA that are involved in tRNA selection in the A site and with the mRNA backbone. Located at the interface of the 30S and 50S subunits, it traverses the body of the 30S subunit contacting proteins on the other side and probably holding the rRNA structure together. The combined cluster of proteins S8, S12 and S17 appears to hold together the shoulder and platform of the 30S subunit. This is Small ribosomal subunit protein uS12 from Wolbachia sp. subsp. Brugia malayi (strain TRS).